The primary structure comprises 154 residues: ATP synthase subunit b', chloroplastic (154 aa).

The helical transmembrane segment at Gly-22–Leu-42 threads the bilayer.

The protein belongs to the ATPase B chain family. F-type ATPases have 2 components, F(1) - the catalytic core - and F(0) - the membrane proton channel. F(1) has five subunits: alpha(3), beta(3), gamma(1), delta(1), epsilon(1). F(0) has four main subunits: a(1), b(1), b'(1) and c(10-14). The alpha and beta chains form an alternating ring which encloses part of the gamma chain. F(1) is attached to F(0) by a central stalk formed by the gamma and epsilon chains, while a peripheral stalk is formed by the delta, b and b' chains.

It localises to the plastid. It is found in the chloroplast thylakoid membrane. Its function is as follows. F(1)F(0) ATP synthase produces ATP from ADP in the presence of a proton or sodium gradient. F-type ATPases consist of two structural domains, F(1) containing the extramembraneous catalytic core and F(0) containing the membrane proton channel, linked together by a central stalk and a peripheral stalk. During catalysis, ATP synthesis in the catalytic domain of F(1) is coupled via a rotary mechanism of the central stalk subunits to proton translocation. Component of the F(0) channel, it forms part of the peripheral stalk, linking F(1) to F(0). The b'-subunit is a diverged and duplicated form of b found in plants and photosynthetic bacteria. This Vaucheria litorea (Yellow-green alga) protein is ATP synthase subunit b', chloroplastic.